A 345-amino-acid polypeptide reads, in one-letter code: S-adenosylmethionine:tRNA ribosyltransferase-isomerase (345 aa).

This sequence belongs to the QueA family. In terms of assembly, monomer.

It is found in the cytoplasm. It catalyses the reaction 7-aminomethyl-7-carbaguanosine(34) in tRNA + S-adenosyl-L-methionine = epoxyqueuosine(34) in tRNA + adenine + L-methionine + 2 H(+). It participates in tRNA modification; tRNA-queuosine biosynthesis. In terms of biological role, transfers and isomerizes the ribose moiety from AdoMet to the 7-aminomethyl group of 7-deazaguanine (preQ1-tRNA) to give epoxyqueuosine (oQ-tRNA). The protein is S-adenosylmethionine:tRNA ribosyltransferase-isomerase of Rhodospirillum rubrum (strain ATCC 11170 / ATH 1.1.1 / DSM 467 / LMG 4362 / NCIMB 8255 / S1).